A 120-amino-acid polypeptide reads, in one-letter code: Aspartate 1-decarboxylase (120 aa).

Catalysis depends on serine 25, which acts as the Schiff-base intermediate with substrate; via pyruvic acid. Serine 25 is subject to Pyruvic acid (Ser). Threonine 57 lines the substrate pocket. Tyrosine 58 (proton donor) is an active-site residue. 73–75 (GAA) contributes to the substrate binding site.

Belongs to the PanD family. Heterooctamer of four alpha and four beta subunits. Requires pyruvate as cofactor. Post-translationally, is synthesized initially as an inactive proenzyme, which is activated by self-cleavage at a specific serine bond to produce a beta-subunit with a hydroxyl group at its C-terminus and an alpha-subunit with a pyruvoyl group at its N-terminus.

The protein resides in the cytoplasm. It carries out the reaction L-aspartate + H(+) = beta-alanine + CO2. It participates in cofactor biosynthesis; (R)-pantothenate biosynthesis; beta-alanine from L-aspartate: step 1/1. Functionally, catalyzes the pyruvoyl-dependent decarboxylation of aspartate to produce beta-alanine. The protein is Aspartate 1-decarboxylase of Coprothermobacter proteolyticus (strain ATCC 35245 / DSM 5265 / OCM 4 / BT).